Consider the following 28-residue polypeptide: Trypsin inhibitor 2 (28 aa).

Intrachain disulfides connect Cys-3-Cys-20, Cys-10-Cys-22, and Cys-16-Cys-27.

Belongs to the protease inhibitor I7 (squash-type serine protease inhibitor) family.

The protein localises to the secreted. Its function is as follows. Inhibits trypsin. This Momordica charantia (Bitter gourd) protein is Trypsin inhibitor 2.